Consider the following 319-residue polypeptide: 12-(S)-hydroxy-5,8,10,14-eicosatetraenoic acid receptor (319 aa).

Topologically, residues 1–16 are extracellular; that stretch reads MPFPNCSAPSTVVATA. The N-linked (GlcNAc...) asparagine glycan is linked to asparagine 5. The helical transmembrane segment at 17 to 37 threads the bilayer; it reads VGVLLGLECGLGLLGNAVALW. Residues 38 to 52 lie on the Cytoplasmic side of the membrane; it reads TFLFRVRVWKPYAVY. The chain crosses the membrane as a helical span at residues 53-73; it reads LLNLALADLLLAACLPFLAAF. Over 74 to 91 the chain is Extracellular; it reads YLSLQAWHLGRVGCWALH. Residues 92 to 110 form a helical membrane-spanning segment; that stretch reads FLLDLSRSVGMAFLAAVAL. The Cytoplasmic segment spans residues 111–131; the sequence is DRYLRVVHPRLKVNLLSPQAA. A helical transmembrane segment spans residues 132–152; sequence LGVSGLVWLLMVALTCPGLLI. The Extracellular segment spans residues 153 to 180; sequence SEAAQNSTRCHSFYSRADGSFSIIWQEA. The helical transmembrane segment at 181–201 threads the bilayer; that stretch reads LSCLQFVLPFGLIVFCNAGII. Residues 202 to 219 are Cytoplasmic-facing; it reads RALQKRLREPEKQPKLQR. Residues 220–240 form a helical membrane-spanning segment; that stretch reads AQALVTLVVVLFALCFLPCFL. Topologically, residues 241–265 are extracellular; the sequence is ARVLMHIFQNLGSCRALCAVAHTSD. Residues 266-284 traverse the membrane as a helical segment; that stretch reads VTGSLTYLHSVLNPVVYCF. Residues 285–319 are Cytoplasmic-facing; that stretch reads SSPTFRSSYRRVFHTLRGKGQAAEPPDFNPRDSYS.

This sequence belongs to the G-protein coupled receptor 1 family. As to quaternary structure, interacts with KRAS; in a farnesylation-dependent manner.

The protein localises to the cell membrane. Its function is as follows. High-affinity receptor for 12-(S)-hydroxy-5,8,10,14-eicosatetraenoic acid (12-S-HETE), with much lower affinities for other HETE isomers. 12-S-HETE is a eicosanoid, a 12-lipoxygenase (ALOX12) metabolite of arachidonic acid, involved in many physiologic and pathologic processes. 12-S-HETE-binding leads to activation of ERK1/2 (MAPK3/MAPK1), MEK, and NF-kappa-B pathways leading to cell growth. Plays a crucial role for proliferation, survival and macropinocytosis of KRAS-dependent cancer cells by mediating the translocation of KRAS from the endoplasmic reticulum to the plasma membrane (PM) and its association with the PM. Contributes to enhanced immune responses by inducing dendrite protrusion of small intestinal CX3CR1(+) phagocytes for the uptake of luminal antigens. Acts also as a key receptor for 12-(S)-HETE-mediated liver ischemia reperfusion injury. In terms of biological role, proton-sensing G protein-coupled receptor. This is 12-(S)-hydroxy-5,8,10,14-eicosatetraenoic acid receptor (GPR31) from Homo sapiens (Human).